The sequence spans 72 residues: Brevinin-2SN3 (72 aa).

The signal sequence occupies residues 1-22; sequence MFTLKKPLLLLVFLGMISLSLC. Residues 23–40 constitute a propeptide, removed in mature form; the sequence is QDERGADEDDGGEMTEEE. The cysteines at positions 66 and 72 are disulfide-linked.

This sequence belongs to the frog skin active peptide (FSAP) family. Brevinin subfamily. Expressed by the skin glands.

Its subcellular location is the secreted. Its function is as follows. Antimicrobial peptide. Active against a variety of Gram-negative and Gram-positive bacterial strains. Active against fungus C.glabrata 090902 but not against C.albicans ATCC 10231. Shows hemolytic activity against human erythrocytes. The polypeptide is Brevinin-2SN3 (Sylvirana spinulosa (Fine-spined frog)).